A 169-amino-acid chain; its full sequence is MEKLAELGINIPSFIAQIVNFGLLLGLLYLFAYKPILAKLDERSTRIKESMERTDQVKEQAQKAEEEFKKKIGEASQQGQLVIERAVKTGDEIRQKAIEEAKAEAEAMLSRARTEIRQERDEVVDQLRKEFAELTILAAGKVIDQSLDKKAHQALIDSVLENSTDLRKN.

A helical membrane pass occupies residues 11–31; the sequence is IPSFIAQIVNFGLLLGLLYLF.

The protein belongs to the ATPase B chain family. In terms of assembly, F-type ATPases have 2 components, F(1) - the catalytic core - and F(0) - the membrane proton channel. F(1) has five subunits: alpha(3), beta(3), gamma(1), delta(1), epsilon(1). F(0) has three main subunits: a(1), b(2) and c(10-14). The alpha and beta chains form an alternating ring which encloses part of the gamma chain. F(1) is attached to F(0) by a central stalk formed by the gamma and epsilon chains, while a peripheral stalk is formed by the delta and b chains.

Its subcellular location is the cell membrane. Functionally, f(1)F(0) ATP synthase produces ATP from ADP in the presence of a proton or sodium gradient. F-type ATPases consist of two structural domains, F(1) containing the extramembraneous catalytic core and F(0) containing the membrane proton channel, linked together by a central stalk and a peripheral stalk. During catalysis, ATP synthesis in the catalytic domain of F(1) is coupled via a rotary mechanism of the central stalk subunits to proton translocation. Its function is as follows. Component of the F(0) channel, it forms part of the peripheral stalk, linking F(1) to F(0). This is ATP synthase subunit b from Dehalococcoides mccartyi (strain ATCC BAA-2100 / JCM 16839 / KCTC 5957 / BAV1).